The primary structure comprises 366 residues: Histone-lysine N-methyltransferase SETD7 (366 aa).

3 MORN repeats span residues 36-58 (FEGN…DGST), 59-81 (LEGY…DGGV), and 106-128 (FKGQ…DGGS). In terms of domain architecture, SET spans 214 to 336 (ERVYVADSLI…AEEELTVAYG (123 aa)). S-adenosyl-L-methionine-binding positions include 226 to 228 (AGE), N296, H297, and E356.

Belongs to the class V-like SAM-binding methyltransferase superfamily. Histone-lysine methyltransferase family. SET7 subfamily. Interacts with IPF1/PDX-1.

Its subcellular location is the nucleus. It is found in the chromosome. The catalysed reaction is L-lysyl(4)-[histone H3] + S-adenosyl-L-methionine = N(6)-methyl-L-lysyl(4)-[histone H3] + S-adenosyl-L-homocysteine + H(+). It catalyses the reaction L-lysyl-[protein] + S-adenosyl-L-methionine = N(6)-methyl-L-lysyl-[protein] + S-adenosyl-L-homocysteine + H(+). In terms of biological role, histone methyltransferase that specifically monomethylates 'Lys-4' of histone H3. H3 'Lys-4' methylation represents a specific tag for epigenetic transcriptional activation. Plays a central role in the transcriptional activation of genes such as collagenase or insulin. Recruited by IPF1/PDX-1 to the insulin promoter, leading to activate transcription. Also has methyltransferase activity toward non-histone proteins such as CGAS, p53/TP53, TAF10, and possibly TAF7 by recognizing and binding the [KR]-[STA]-K in substrate proteins. Monomethylates 'Lys-189' of TAF10, leading to increase the affinity of TAF10 for RNA polymerase II. Monomethylates 'Lys-372' of p53/TP53, stabilizing p53/TP53 and increasing p53/TP53-mediated transcriptional activation. Monomethylates 'Lys-491' of CGAS, promoting interaction between SGF29 and CGAS. This Mus musculus (Mouse) protein is Histone-lysine N-methyltransferase SETD7 (Setd7).